We begin with the raw amino-acid sequence, 93 residues long: Putative pterin-4-alpha-carbinolamine dehydratase (93 aa).

The protein belongs to the pterin-4-alpha-carbinolamine dehydratase family.

The catalysed reaction is (4aS,6R)-4a-hydroxy-L-erythro-5,6,7,8-tetrahydrobiopterin = (6R)-L-erythro-6,7-dihydrobiopterin + H2O. In Roseiflexus castenholzii (strain DSM 13941 / HLO8), this protein is Putative pterin-4-alpha-carbinolamine dehydratase.